Reading from the N-terminus, the 664-residue chain is Zinc finger protein 800 (664 aa).

The C2H2-type 1; degenerate zinc-finger motif lies at 69–91 (FECKLCRSLFRGLPNLITHKKFY). K132 is covalently cross-linked (Glycyl lysine isopeptide (Lys-Gly) (interchain with G-Cter in SUMO2)). Polar residues-rich tracts occupy residues 154–179 (IEVT…EQSK) and 207–224 (SDEQ…SDNS). The segment at 154 to 224 (IEVTESSSTP…QADLETSDNS (71 aa)) is disordered. The C2H2-type 2 zinc finger occupies 230-253 (LICCLCRKEFNSRRGVRRHIRKVH). K279 is covalently cross-linked (Glycyl lysine isopeptide (Lys-Gly) (interchain with G-Cter in SUMO2)). A C2H2-type 3 zinc finger spans residues 287–310 (RSCPVCCKSFATKANVRRHFDEVH). A Phosphoserine modification is found at S317. Position 319 is a phosphothreonine (T319). The segment at 328 to 349 (QPLFLDSISPKKSFKTRKQKSS) is disordered. Residue S336 is modified to Phosphoserine. The span at 339–348 (KSFKTRKQKS) shows a compositional bias: basic residues. The C2H2-type 4 zinc-finger motif lies at 357-382 (TACKCLLCKRKYSSQIMLKRHMQIVH). The tract at residues 388 to 476 (GTNSKREKGP…GGQQKTRKPK (89 aa)) is disordered. Residue K392 forms a Glycyl lysine isopeptide (Lys-Gly) (interchain with G-Cter in SUMO2) linkage. A Glycyl lysine isopeptide (Lys-Gly) (interchain with G-Cter in SUMO1); alternate cross-link involves residue K409. K409 is covalently cross-linked (Glycyl lysine isopeptide (Lys-Gly) (interchain with G-Cter in SUMO2); alternate). Polar residues predominate over residues 416-436 (VESSPPSITHSPQNELKGTNH). Residues S422, S426, S455, S457, S460, and S462 each carry the phosphoserine modification. The span at 458–470 (PKSTSPSAAGGQQ) shows a compositional bias: polar residues. K476 is covalently cross-linked (Glycyl lysine isopeptide (Lys-Gly) (interchain with G-Cter in SUMO2)). 2 consecutive C2H2-type zinc fingers follow at residues 486–508 (LYCK…IELH) and 519–542 (YKCP…TVVH). Disordered regions lie at residues 574–599 (KRGP…PSKK) and 635–664 (HHKK…KALV). A compositionally biased stretch (basic and acidic residues) spans 577–591 (PSRDEAKHSDSKHDG). K599 is covalently cross-linked (Glycyl lysine isopeptide (Lys-Gly) (interchain with G-Cter in SUMO2)). The C2H2-type 7 zinc-finger motif lies at 618–640 (HRCNKCGKAFAKKTYLEHHKKTH). Basic residues predominate over residues 653 to 664 (TKGRSTRSKALV).

This sequence belongs to the krueppel C2H2-type zinc-finger protein family.

It is found in the nucleus. In terms of biological role, may be involved in transcriptional regulation. In Homo sapiens (Human), this protein is Zinc finger protein 800 (ZNF800).